We begin with the raw amino-acid sequence, 342 residues long: Outer spore wall protein RRT8 (342 aa).

Residues 1 to 109 (MKAGIELISH…VLTNPVYWKH (109 aa)) are Cytoplasmic-facing. Residues 110–130 (ILLFAVCYALIFVTIAGLFYV) form a helical membrane-spanning segment. Threonine 131 is a topological domain (extracellular). Residues 132-152 (LVPLLVTWAILLLGPLGVILV) traverse the membrane as a helical segment. The Cytoplasmic segment spans residues 153-240 (HIQWILQTNV…PRLLFRMFFK (88 aa)). Residues 241–261 (VSNFTSLTLLSLIPIVGPILA) form a helical membrane-spanning segment. At 262–299 (NQLMAPKRTFTYLQRYFLLKGFSKKQAKDFQYEHYASF) the chain is on the extracellular side. The helical transmembrane segment at 300–320 (ICFGMSAGLLELIPFFTIVTI) threads the bilayer. Topologically, residues 321–342 (SSNTVGAAKWCTSLLKGERKKE) are cytoplasmic.

This sequence belongs to the LDS family.

It localises to the prospore membrane. It is found in the lipid droplet. The protein localises to the spore wall. Involved in spore wall assembly. May be involved in the modulation of rDNA transcription. This chain is Outer spore wall protein RRT8, found in Saccharomyces cerevisiae (strain ATCC 204508 / S288c) (Baker's yeast).